The sequence spans 442 residues: Tryptophan synthase beta chain 2 (442 aa).

Lys122 carries the post-translational modification N6-(pyridoxal phosphate)lysine.

The protein belongs to the TrpB family. Tetramer of two alpha and two beta chains. Requires pyridoxal 5'-phosphate as cofactor.

The catalysed reaction is (1S,2R)-1-C-(indol-3-yl)glycerol 3-phosphate + L-serine = D-glyceraldehyde 3-phosphate + L-tryptophan + H2O. Its pathway is amino-acid biosynthesis; L-tryptophan biosynthesis; L-tryptophan from chorismate: step 5/5. In terms of biological role, the beta subunit is responsible for the synthesis of L-tryptophan from indole and L-serine. In Methanosarcina mazei (strain ATCC BAA-159 / DSM 3647 / Goe1 / Go1 / JCM 11833 / OCM 88) (Methanosarcina frisia), this protein is Tryptophan synthase beta chain 2 (trpB2).